The sequence spans 343 residues: S-adenosylmethionine:tRNA ribosyltransferase-isomerase (343 aa).

Belongs to the QueA family. In terms of assembly, monomer.

The protein localises to the cytoplasm. The catalysed reaction is 7-aminomethyl-7-carbaguanosine(34) in tRNA + S-adenosyl-L-methionine = epoxyqueuosine(34) in tRNA + adenine + L-methionine + 2 H(+). It functions in the pathway tRNA modification; tRNA-queuosine biosynthesis. In terms of biological role, transfers and isomerizes the ribose moiety from AdoMet to the 7-aminomethyl group of 7-deazaguanine (preQ1-tRNA) to give epoxyqueuosine (oQ-tRNA). The polypeptide is S-adenosylmethionine:tRNA ribosyltransferase-isomerase (Enterococcus faecalis (strain ATCC 700802 / V583)).